The following is a 425-amino-acid chain: MLDIRFVRANPDAIREDLKKRNDMEKLAWIDDLLVQDIRHRELIGQTNELRRRRNSISYDINRAKKAGEDASALIAEAAGLPGRIKENEAEMEEISKKIRYYLMRIPNILHESVPVGADDTQNVEVKRYGTPRTFTFELKNHGQLAADNDWADFERATKTSGAGFYFLKGNLVLLDLALQRFSLDILMEKGYTPIIPPYMINRKSYEEVTDLDDFEKVMYKIEDDDAYLIATSEHPMAAMYQDEIFEEKDLPLRLAGLSPCFRREIGSHGLDTKGLFRVHQFHKVEQFVYCHPDDSWTIHEELRENAEEIFQKLEIPYRVVNICTGDIGTVAAKKYDIEAWMPRENEYREVVSCSNCTTYQAVRLNIRVRDKEDFESKQFVHTLNSTAIATSRAMRAILENNQQEDGSVVIPKVLRPYMNDKEFL.

An L-serine-binding site is contributed by 232 to 234 (TSE). Residues 263–265 (RRE) and Val279 contribute to the ATP site. Glu286 lines the L-serine pocket. Position 350–353 (350–353 (EVVS)) interacts with ATP. An L-serine-binding site is contributed by Thr387.

Belongs to the class-II aminoacyl-tRNA synthetase family. Type-1 seryl-tRNA synthetase subfamily. Homodimer. The tRNA molecule binds across the dimer.

The protein resides in the cytoplasm. The catalysed reaction is tRNA(Ser) + L-serine + ATP = L-seryl-tRNA(Ser) + AMP + diphosphate + H(+). It carries out the reaction tRNA(Sec) + L-serine + ATP = L-seryl-tRNA(Sec) + AMP + diphosphate + H(+). It participates in aminoacyl-tRNA biosynthesis; selenocysteinyl-tRNA(Sec) biosynthesis; L-seryl-tRNA(Sec) from L-serine and tRNA(Sec): step 1/1. In terms of biological role, catalyzes the attachment of serine to tRNA(Ser). Is also able to aminoacylate tRNA(Sec) with serine, to form the misacylated tRNA L-seryl-tRNA(Sec), which will be further converted into selenocysteinyl-tRNA(Sec). In Methanospirillum hungatei JF-1 (strain ATCC 27890 / DSM 864 / NBRC 100397 / JF-1), this protein is Serine--tRNA ligase.